The sequence spans 1342 residues: DNA-directed RNA polymerase subunit beta (1342 aa).

It belongs to the RNA polymerase beta chain family. As to quaternary structure, the RNAP catalytic core consists of 2 alpha, 1 beta, 1 beta' and 1 omega subunit. When a sigma factor is associated with the core the holoenzyme is formed, which can initiate transcription.

The catalysed reaction is RNA(n) + a ribonucleoside 5'-triphosphate = RNA(n+1) + diphosphate. Functionally, DNA-dependent RNA polymerase catalyzes the transcription of DNA into RNA using the four ribonucleoside triphosphates as substrates. This is DNA-directed RNA polymerase subunit beta from Aliivibrio fischeri (strain MJ11) (Vibrio fischeri).